The primary structure comprises 310 residues: Cytochrome f (310 aa).

Residues 1–26 (MNIKLTLLVLISIINLMIIQPIQTLA) form the signal peptide. The heme site is built by Phe27, Cys47, Cys50, and His51. A helical transmembrane segment spans residues 276–296 (IKGMIVFFFTVTIAQIFFVLK).

This sequence belongs to the cytochrome f family. As to quaternary structure, the 4 large subunits of the cytochrome b6-f complex are cytochrome b6, subunit IV (17 kDa polypeptide, petD), cytochrome f and the Rieske protein, while the 4 small subunits are PetG, PetL, PetM and PetN. The complex functions as a dimer. It depends on heme as a cofactor.

It localises to the plastid. The protein localises to the chloroplast thylakoid membrane. Its function is as follows. Component of the cytochrome b6-f complex, which mediates electron transfer between photosystem II (PSII) and photosystem I (PSI), cyclic electron flow around PSI, and state transitions. The polypeptide is Cytochrome f (Gracilaria tenuistipitata var. liui (Red alga)).